Reading from the N-terminus, the 554-residue chain is Intraflagellar transport protein 56 (554 aa).

The segment at 1-23 (MMLSRAKPAVGNEVQQIDKKKKK) is disordered. 4 TPR repeats span residues 57–90 (EDTE…EGCN), 92–125 (DVWV…LQNR), 151–184 (IEDQ…NRDF), and 468–501 (ANDC…EGKR).

Belongs to the IFT56 family. As to quaternary structure, component of the IFT complex B.

It localises to the cell projection. The protein resides in the cilium. In terms of biological role, component of the intraflagellar transport (IFT) complex B required for transport of proteins in the motile cilium. Required for transport of specific ciliary cargo proteins related to motility, while it is neither required for IFT complex B assembly or motion nor for cilium assembly. Plays a key role in maintaining the integrity of the IFT complex B and the proper ciliary localization of the IFT complex B components. Essential for maintaining proper microtubule organization within the ciliary axoneme. This chain is Intraflagellar transport protein 56, found in Xenopus tropicalis (Western clawed frog).